The primary structure comprises 318 residues: Taste receptor type 2 member 14 (318 aa).

Residues 1 to 7 (MGGVIKN) lie on the Extracellular side of the membrane. The chain crosses the membrane as a helical span at residues 8–28 (ISTFVLIVEFIIGNLGNSFIA). Topologically, residues 29–55 (LVNCIDWVKRRKISLVDQLLTALAISR) are cytoplasmic. Residues 56-76 (ISLVWLIFGSWCVSAFFPALF) form a helical membrane-spanning segment. The Extracellular segment spans residues 77–87 (ATEKMFRMLTN). T86 and W89 together coordinate cholesterol. Residues 88–108 (IWAVTNHFSVWLATGLGTFYF) traverse the membrane as a helical segment. Residues 109 to 129 (LKIANFSNSIFIYLKWRVKKV) lie on the Cytoplasmic side of the membrane. The helical transmembrane segment at 130–150 (VLVLLLVTSVFLFLNIALINI) threads the bilayer. At 151–184 (HINASINGYGGNKTCSSDSNDFTRFSSLIALTSS) the chain is on the extracellular side. N153 and N162 each carry an N-linked (GlcNAc...) asparagine glycan. A180 contributes to the cholesterol binding site. The helical transmembrane segment at 185 to 205 (VFIFIPFILSLAIFLLLTFSL) threads the bilayer. The Cytoplasmic segment spans residues 206–232 (WKHCKKMQHTVKASGDASTKAHRGVMQ). A helical transmembrane segment spans residues 233-253 (TVIAFLLLYPIFSLSFFIAVW). Over 254–261 (TSGWLEEN) the chain is Extracellular. The chain crosses the membrane as a helical span at residues 262-282 (LIILSQVMGMAYPSCHSCILI). L265 and V268 together coordinate cholesterol. Residues 283-317 (LGNKKLRQASLSVLWWLKYRFKDGEPSGHKGFRES) are Cytoplasmic-facing.

This sequence belongs to the G-protein coupled receptor T2R family. Core component of the TAS2R14-GNAI1 complex, consisting of TAS2R14, GNAI1, GNB1 and GNG2; within the complex interacts with GNAI1. Core component of the TAS2R14-GNAT3 complex, consisting of TAS2R14, GNAT3, GNB1 and GNG2; within the complex interacts with GNAT3. Core component of the TAS2R14-GNAS2 complex, consisting of TAS2R14, GNAS2, GNB1 and GNG2; within the complex interacts with GNAS2.

It localises to the membrane. It catalyses the reaction Ca(2+)(in) = Ca(2+)(out). The catalysed reaction is 3',5'-cyclic AMP(in) = 3',5'-cyclic AMP(out). Its activity is regulated as follows. Basal activity is enhanced by binding to bitter tastants, such as flufenamic acid and aristolochic acid. Regulated by cholesterol in a concentration-dependent manner. Gustducin-linked G-protein coupled receptor that plays a role in the perception of bitterness. The activity of this receptor stimulates GNAT3, activating the gustducin G-protein pathway. Likely plays a role in sensing the chemical composition of the gastrointestinal content and other extra-oral tissues via the inhibitory G-protein pathways. The sequence is that of Taste receptor type 2 member 14 (TAS2R14) from Pongo pygmaeus (Bornean orangutan).